The sequence spans 127 residues: Large ribosomal subunit protein bL17 (127 aa).

The protein belongs to the bacterial ribosomal protein bL17 family. In terms of assembly, part of the 50S ribosomal subunit. Contacts protein L32.

In Limosilactobacillus reuteri (strain DSM 20016) (Lactobacillus reuteri), this protein is Large ribosomal subunit protein bL17.